The following is a 298-amino-acid chain: Tyrosine recombinase XerC (298 aa).

One can recognise a Core-binding (CB) domain in the interval 1-84; the sequence is MNHIQEAFLN…TLRTFYEYWM (84 aa). The region spanning 105-286 is the Tyr recombinase domain; the sequence is YLPQFFYEEE…SNQQLRKVYL (182 aa). Residues R145, K169, H238, R241, and H264 contribute to the active site. Y273 serves as the catalytic O-(3'-phospho-DNA)-tyrosine intermediate.

The protein belongs to the 'phage' integrase family. XerC subfamily. In terms of assembly, forms a cyclic heterotetrameric complex composed of two molecules of XerC and two molecules of XerD.

The protein resides in the cytoplasm. Site-specific tyrosine recombinase, which acts by catalyzing the cutting and rejoining of the recombining DNA molecules. The XerC-XerD complex is essential to convert dimers of the bacterial chromosome into monomers to permit their segregation at cell division. It also contributes to the segregational stability of plasmids. The chain is Tyrosine recombinase XerC from Staphylococcus aureus (strain JH1).